Reading from the N-terminus, the 632-residue chain is Palmitoyltransferase ZDHHC17 (632 aa).

Residues 1–304 (MQREEGFNTK…LKADKEFRQK (304 aa)) lie on the Cytoplasmic side of the membrane. A necessary and sufficient for interaction with DNAJC5 and SNAP25 region spans residues 11–305 (MADGPDEYET…KADKEFRQKV (295 aa)). 7 ANK repeats span residues 51–86 (THID…VRQP), 89–118 (ENVT…IVDQ), 123–152 (LNST…DPSL), 156–185 (EGCS…DVDM), 189–219 (NGMT…SVNL), 224–253 (HKNT…NVDA), and 257–286 (KGES…AKGY). A run of 2 helical transmembrane segments spans residues 305-325 (VMLG…DLDI) and 326-346 (DSWL…QFLS). The Cytoplasmic portion of the chain corresponds to 347–357 (KSFFDHSMHSA). Residues 358-378 (LPLGIYLATKFWMYVTWFFWF) form a helical membrane-spanning segment. The Lumenal segment spans residues 379–381 (WND). The helical transmembrane segment at 382–402 (LNFLFIHLPFLANSVALFYNF) threads the bilayer. The Cytoplasmic segment spans residues 403 to 480 (GKSWKSDPGI…GNCVGAGNHR (78 aa)). Residues 437 to 487 (IFCSTCLIRKPVRSKHCGVCNRCIAKFDHHCPWVGNCVGAGNHRYFMGYLF) form the DHHC domain. Cysteine 467 acts as the S-palmitoyl cysteine intermediate in catalysis. A helical membrane pass occupies residues 481–501 (YFMGYLFFLLFMICWMIYGCV). Residues 502–529 (SYWGLHCETTYTKDGFWTYITQIATCSP) lie on the Lumenal side of the membrane. Residues 530–550 (WMFWMFLNSVFHFLWVAVLLM) form a helical membrane-spanning segment. Residues 551-632 (CQLYQITCLG…QISGSGYQLV (82 aa)) are Cytoplasmic-facing.

This sequence belongs to the DHHC palmitoyltransferase family. AKR/ZDHHC17 subfamily. In terms of assembly, interacts (via ANK repeats) with numerous proteins (via the consensus sequence motif [VIAP]-[VIT]-x-x-Q-P). Interacts (via ANK repeats) with CLIP3. Interacts (via ANK repeats) with HTT. Interacts (via ANK repeats) with DNAJC5 (via C-terminus). Interacts (via ANK repeats) with MAP6. Interacts (via ANK repeats) with SNAP23. Interacts (via ANK repeats) with SNAP25. Interacts (via ANK repeats) with EVL. Interacts with SPRED1 and SPRED3. Interacts with GPM6A and OPTN. May interact (via ANK repeats) with SPRED2. May interact with NTRK1; may regulate its localization and function. Post-translationally, autopalmitoylated. Autopalmitoylation has a regulatory role in ZDHHC17-mediated Mg(2+) transport. In terms of tissue distribution, expressed in liver, testis, kidney, heart, pancreas and brain. Highest expression was seen in the brain. Localized predominantly in the perinuclear regions of neurons from the cortex, striatum and hippocampus. Colocalized with HTT in the medium spiny neurons of the striatum and the spiny neurons that project into the globus pallidus.

The protein localises to the golgi apparatus membrane. Its subcellular location is the cytoplasmic vesicle membrane. The protein resides in the presynaptic cell membrane. It carries out the reaction L-cysteinyl-[protein] + hexadecanoyl-CoA = S-hexadecanoyl-L-cysteinyl-[protein] + CoA. It catalyses the reaction L-cysteinyl-[protein] + tetradecanoyl-CoA = S-tetradecanoyl-L-cysteinyl-[protein] + CoA. The enzyme catalyses L-cysteinyl-[protein] + octadecanoyl-CoA = S-octadecanoyl-L-cysteinyl-[protein] + CoA. Palmitoyltransferase that catalyzes the addition of palmitate onto various protein substrates and is involved in a variety of cellular processes. Has no stringent fatty acid selectivity and in addition to palmitate can also transfer onto target proteins myristate from tetradecanoyl-CoA and stearate from octadecanoyl-CoA. Palmitoyltransferase specific for a subset of neuronal proteins, including SNAP25, DLG4/PSD95, GAD2, SYT1 and HTT. Also palmitoylates neuronal protein GPM6A as well as SPRED1 and SPRED3. Could also play a role in axonogenesis through the regulation of NTRK1 and the downstream ERK1/ERK2 signaling cascade. May be involved in the sorting or targeting of critical proteins involved in the initiating events of endocytosis at the plasma membrane. May play a role in Mg(2+) transport. Could also palmitoylate DNAJC5 and regulate its localization to the Golgi membrane. Palmitoylates CASP6, thereby preventing its dimerization and subsequent activation. This Mus musculus (Mouse) protein is Palmitoyltransferase ZDHHC17.